A 249-amino-acid polypeptide reads, in one-letter code: Enolase-phosphatase E1 (249 aa).

Mg(2+)-binding residues include D14 and E16. Substrate is bound by residues 141–142 (SS) and K175. D200 contacts Mg(2+).

Belongs to the HAD-like hydrolase superfamily. MasA/MtnC family. In terms of assembly, monomer. The cofactor is Mg(2+).

Its subcellular location is the cytoplasm. The protein localises to the nucleus. The catalysed reaction is 5-methylsulfanyl-2,3-dioxopentyl phosphate + H2O = 1,2-dihydroxy-5-(methylsulfanyl)pent-1-en-3-one + phosphate. It participates in amino-acid biosynthesis; L-methionine biosynthesis via salvage pathway; L-methionine from S-methyl-5-thio-alpha-D-ribose 1-phosphate: step 3/6. Its pathway is amino-acid biosynthesis; L-methionine biosynthesis via salvage pathway; L-methionine from S-methyl-5-thio-alpha-D-ribose 1-phosphate: step 4/6. Its function is as follows. Bifunctional enzyme that catalyzes the enolization of 2,3-diketo-5-methylthiopentyl-1-phosphate (DK-MTP-1-P) into the intermediate 2-hydroxy-3-keto-5-methylthiopentenyl-1-phosphate (HK-MTPenyl-1-P), which is then dephosphorylated to form the acireductone 1,2-dihydroxy-3-keto-5-methylthiopentene (DHK-MTPene). The chain is Enolase-phosphatase E1 from Drosophila mojavensis (Fruit fly).